A 678-amino-acid polypeptide reads, in one-letter code: Zinc finger translocation-associated protein (678 aa).

Disordered stretches follow at residues 1–100 (MEPG…PGRD), 174–250 (GAGG…GSRG), 333–413 (LSEL…RDHR), and 493–583 (PESP…NYQP). Residues 66–78 (PSSRARGPASSGR) are compositionally biased toward low complexity. Basic and acidic residues predominate over residues 79–88 (KYSDHCEARA). Residues 187-200 (AEEEEEEDEEEEEG) show a composition bias toward acidic residues. Positions 205–214 (ACPPKGSGKA) are enriched in low complexity. A Glycyl lysine isopeptide (Lys-Gly) (interchain with G-Cter in SUMO2) cross-link involves residue Lys-375. Over residues 493–509 (PESPSVPVAPSTASASE) the composition is skewed to low complexity. 2 stretches are compositionally biased toward acidic residues: residues 512-524 (GGAE…EEWW) and 539-549 (AEEEDDEDDSQ). The span at 557 to 572 (PPLPLPPPPPPPPPPP) shows a compositional bias: pro residues. The segment covering 573 to 583 (RSREQRRNYQP) has biased composition (basic and acidic residues).

This is Zinc finger translocation-associated protein from Mus musculus (Mouse).